The sequence spans 360 residues: Phosphoserine aminotransferase (360 aa).

Arg-41 contacts L-glutamate. Pyridoxal 5'-phosphate is bound by residues 75–76 (AS), Trp-101, Thr-151, Asp-171, and Gln-194. Lys-195 carries the N6-(pyridoxal phosphate)lysine modification. Position 236 to 237 (236 to 237 (NT)) interacts with pyridoxal 5'-phosphate.

Belongs to the class-V pyridoxal-phosphate-dependent aminotransferase family. SerC subfamily. As to quaternary structure, homodimer. The cofactor is pyridoxal 5'-phosphate.

The protein localises to the cytoplasm. It carries out the reaction O-phospho-L-serine + 2-oxoglutarate = 3-phosphooxypyruvate + L-glutamate. It catalyses the reaction 4-(phosphooxy)-L-threonine + 2-oxoglutarate = (R)-3-hydroxy-2-oxo-4-phosphooxybutanoate + L-glutamate. The protein operates within amino-acid biosynthesis; L-serine biosynthesis; L-serine from 3-phospho-D-glycerate: step 2/3. It participates in cofactor biosynthesis; pyridoxine 5'-phosphate biosynthesis; pyridoxine 5'-phosphate from D-erythrose 4-phosphate: step 3/5. In terms of biological role, catalyzes the reversible conversion of 3-phosphohydroxypyruvate to phosphoserine and of 3-hydroxy-2-oxo-4-phosphonooxybutanoate to phosphohydroxythreonine. This is Phosphoserine aminotransferase from Herpetosiphon aurantiacus (strain ATCC 23779 / DSM 785 / 114-95).